Consider the following 205-residue polypeptide: MNSKKQDAFQRLIGALKVLPNVGPKSAQRMAYHLLQQKRKEAEELVDALQTALRQVCHCARCNTFCEGGLCDICADETRDGRRLMVVHMPADVSNIEAANCHDGLYFVLMGQINTALGMDVSAIALDRLAQRLDGGEIEEIIIATAFTAEGNATAYVLSEFFKNLPYKVSRLSQGIPLGGELEYVDAGTLAQAVYERRLIKEGGA.

A C4-type zinc finger spans residues 59-74 (CARCNTFCEGGLCDIC). The region spanning 82-177 (RRLMVVHMPA…KVSRLSQGIP (96 aa)) is the Toprim domain.

It belongs to the RecR family.

In terms of biological role, may play a role in DNA repair. It seems to be involved in an RecBC-independent recombinational process of DNA repair. It may act with RecF and RecO. This chain is Recombination protein RecR, found in Neisseria gonorrhoeae (strain ATCC 700825 / FA 1090).